The sequence spans 472 residues: Phosphoenolpyruvate carboxylase (472 aa).

This sequence belongs to the PEPCase type 2 family. In terms of assembly, homotetramer. It depends on Mg(2+) as a cofactor.

The catalysed reaction is oxaloacetate + phosphate = phosphoenolpyruvate + hydrogencarbonate. In terms of biological role, catalyzes the irreversible beta-carboxylation of phosphoenolpyruvate (PEP) to form oxaloacetate (OAA), a four-carbon dicarboxylic acid source for the tricarboxylic acid cycle. In Pyrococcus furiosus (strain ATCC 43587 / DSM 3638 / JCM 8422 / Vc1), this protein is Phosphoenolpyruvate carboxylase.